The primary structure comprises 190 residues: Prostaglandin-H2 D-isomerase (190 aa).

Residues 1–22 (MATHHTLWMGLALLGVLGDLQA) form the signal peptide. A glycan (N-linked (GlcNAc...) asparagine) is linked at Asn51. Cys65 (nucleophile) is an active-site residue. Residue Asn78 is glycosylated (N-linked (GlcNAc...) asparagine). A disulfide bridge connects residues Cys89 and Cys186.

This sequence belongs to the calycin superfamily. Lipocalin family. Monomer.

The protein localises to the rough endoplasmic reticulum. Its subcellular location is the nucleus membrane. It localises to the golgi apparatus. It is found in the cytoplasm. The protein resides in the perinuclear region. The protein localises to the secreted. It carries out the reaction prostaglandin H2 = prostaglandin D2. Functionally, catalyzes the conversion of PGH2 to PGD2, a prostaglandin involved in smooth muscle contraction/relaxation and a potent inhibitor of platelet aggregation. Involved in a variety of CNS functions, such as sedation, NREM sleep and PGE2-induced allodynia, and may have an anti-apoptotic role in oligodendrocytes. Binds small non-substrate lipophilic molecules, including biliverdin, bilirubin, retinal, retinoic acid and thyroid hormone, and may act as a scavenger for harmful hydrophobic molecules and as a secretory retinoid and thyroid hormone transporter. Possibly involved in development and maintenance of the blood-brain, blood-retina, blood-aqueous humor and blood-testis barrier. It is likely to play important roles in both maturation and maintenance of the central nervous system and male reproductive system. Involved in PLA2G3-dependent maturation of mast cells. PLA2G3 is secreted by immature mast cells and acts on nearby fibroblasts upstream to PTDGS to synthesize PGD2, which in turn promotes mast cell maturation and degranulation via PTGDR. The sequence is that of Prostaglandin-H2 D-isomerase (PTGDS) from Gorilla gorilla gorilla (Western lowland gorilla).